The primary structure comprises 394 residues: uncharacterized protein (394 aa).

Helical transmembrane passes span 13–33, 35–55, 73–95, 110–130, 152–172, 179–198, 216–236, 241–261, 267–287, 293–313, 340–360, and 372–392; these read LITTIHMVLTTMIHMALTTMI, MAPTTMIHMALTTMIPTVLPT, TTMTLTVPTTMTLTVPTTMTLTV, ALTVPTMTILMALTMMIHMVL, IHMVLTTMIHMALTTMIPTVL, LMVLTMTIRTAPATTMTLTV, VLLATMILTDLPITTTLTVLP, VLMVPTMTILMALTMMIHMVL, VLMVPATTIRMVLTTMIPTVL, VLMVPTTMIHTAPATTMTLTV, MMTLMVHLIEAVVINTVVTTI, and ILLCLDLSMKILCMSCGYVSA.

The protein localises to the membrane. This is an uncharacterized protein from Saccharomyces cerevisiae (strain ATCC 204508 / S288c) (Baker's yeast).